We begin with the raw amino-acid sequence, 184 residues long: Glutathione-regulated potassium-efflux system ancillary protein KefG (184 aa).

It belongs to the NAD(P)H dehydrogenase (quinone) family. KefG subfamily. In terms of assembly, interacts with KefB.

The protein resides in the cell inner membrane. It catalyses the reaction a quinone + NADH + H(+) = a quinol + NAD(+). The catalysed reaction is a quinone + NADPH + H(+) = a quinol + NADP(+). Its function is as follows. Regulatory subunit of a potassium efflux system that confers protection against electrophiles. Required for full activity of KefB. This chain is Glutathione-regulated potassium-efflux system ancillary protein KefG, found in Escherichia coli O8 (strain IAI1).